A 190-amino-acid chain; its full sequence is RNA pyrophosphohydrolase (190 aa).

The Nudix hydrolase domain occupies 6–149 (GYRPNVGIIL…KRDVYTQALN (144 aa)). The short motif at 38 to 59 (GGIKYGESPVQAMYRELHEEVG) is the Nudix box element. The tract at residues 167–190 (QRVHGPRSTDNPSSETDGHAHIAG) is disordered.

It belongs to the Nudix hydrolase family. RppH subfamily. A divalent metal cation serves as cofactor.

In terms of biological role, accelerates the degradation of transcripts by removing pyrophosphate from the 5'-end of triphosphorylated RNA, leading to a more labile monophosphorylated state that can stimulate subsequent ribonuclease cleavage. The protein is RNA pyrophosphohydrolase of Bordetella parapertussis (strain 12822 / ATCC BAA-587 / NCTC 13253).